Reading from the N-terminus, the 73-residue chain is Sec-independent protein translocase protein TatA (73 aa).

A helical transmembrane segment spans residues 1 to 21 (MGLSWQQLLILLLVVVVIFGT).

Belongs to the TatA/E family. In terms of assembly, the Tat system comprises two distinct complexes: a TatABC complex, containing multiple copies of TatA, TatB and TatC subunits, and a separate TatA complex, containing only TatA subunits. Substrates initially bind to the TatABC complex, which probably triggers association of the separate TatA complex to form the active translocon.

Its subcellular location is the cell inner membrane. Part of the twin-arginine translocation (Tat) system that transports large folded proteins containing a characteristic twin-arginine motif in their signal peptide across membranes. TatA could form the protein-conducting channel of the Tat system. This Histophilus somni (strain 129Pt) (Haemophilus somnus) protein is Sec-independent protein translocase protein TatA.